A 505-amino-acid polypeptide reads, in one-letter code: MSAKIKADEISTIIKERIENFDLSVDVEETGKVISVADGVANVYGLKNVMAGEMVEFESGEKGMALNLEESSVGIVILGKTSGITEGSSVKRLKKLLRVPVGDALIGRVVNSLGEPIDAKGPIEATESRFVEEKAKGIMARKSVHEPLQTGIKAIDALVPIGRGQRELIIGDRQTGKTTVAIDTIINQKGQDVICIYVAIGQKQSTVAQVVKKLEEYGAMDYTIVVNAGASDAAALQYLAPYAGVTMGEYFRDNSRHALIIYDDLSKHAVAYREMSLILRRPPGREAYPGDVFYLHSRLLERASKLNDALGAGSLTALPIIETQAGDVSAYIPTNVISITDGQIFLESDLFNSGIRPAINVGLSVSRVGGAAQIKAIKQVSGTLRLDLAQYRELQAFAQFASDLDESSRKQLERGQKMVEVLKQPPYSPLPVENQVVIIFAGAKGYLDDVATANVTKFEAELYPYIEAKYPEIFEQIRTKKVIDKEVEEILHKALKDFKATFAAN.

171-178 (GDRQTGKT) is a binding site for ATP.

The protein belongs to the ATPase alpha/beta chains family. In terms of assembly, F-type ATPases have 2 components, CF(1) - the catalytic core - and CF(0) - the membrane proton channel. CF(1) has five subunits: alpha(3), beta(3), gamma(1), delta(1), epsilon(1). CF(0) has three main subunits: a(1), b(2) and c(9-12). The alpha and beta chains form an alternating ring which encloses part of the gamma chain. CF(1) is attached to CF(0) by a central stalk formed by the gamma and epsilon chains, while a peripheral stalk is formed by the delta and b chains.

Its subcellular location is the cell inner membrane. It carries out the reaction ATP + H2O + 4 H(+)(in) = ADP + phosphate + 5 H(+)(out). Functionally, produces ATP from ADP in the presence of a proton gradient across the membrane. The alpha chain is a regulatory subunit. In Campylobacter concisus (strain 13826), this protein is ATP synthase subunit alpha.